Here is a 634-residue protein sequence, read N- to C-terminus: ATP-dependent zinc metalloprotease FtsH (634 aa).

Topologically, residues 1–5 are cytoplasmic; the sequence is MNALK. A helical membrane pass occupies residues 6-26; it reads NFFIWAIIIGAAIVAFNLFEG. Topologically, residues 27–100 are periplasmic; sequence KREFTTKVSL…VANPEPPGGW (74 aa). A helical membrane pass occupies residues 101-121; the sequence is LVNVFLSWLPILFFIGIWIFL. Topologically, residues 122–634 are cytoplasmic; it reads LRQMSGGGNV…KSEEVKEEVV (513 aa). Position 195–202 (195–202) interacts with ATP; it reads GEPGVGKT. Residue H418 participates in Zn(2+) binding. E419 is an active-site residue. Residues H422 and D496 each coordinate Zn(2+). The interval 615 to 634 is disordered; the sequence is DRKSEENKELKSEEVKEEVV.

The protein in the central section; belongs to the AAA ATPase family. This sequence in the C-terminal section; belongs to the peptidase M41 family. The isolated protease domain (residues 405-634) forms a stable hexamer. It depends on Zn(2+) as a cofactor.

It is found in the cell inner membrane. Functionally, acts as a processive, ATP-dependent zinc metallopeptidase for both cytoplasmic and membrane proteins. Plays a role in the quality control of integral membrane proteins. The protein is ATP-dependent zinc metalloprotease FtsH of Aquifex aeolicus (strain VF5).